A 537-amino-acid chain; its full sequence is MKQTGPYISKNGADKSGFKNLAATHWNYRPAALYEEAIRRGEGHVAANGPFVVKTGVHTGRSAKDKFIVRDASTEKTVWWDNNKSMTPEAFDLLHADMLKHAEGKELFIQDLFGGADQTHRLATRIYTEYAWHSLFIQNLLIEPKPEELGSFDPQFTIIDLPSFEADPEKYGVRTGTVIACNFAKRIVLIAGTSYAGEIKKSVFSMLNYELPPKRVMPMHCSANVGEEGDTAIFFGLSGTGKTTLSAVATRTLIGDDEHGWSENGVFNFEGGCYAKMIKLSAEAEPEIYAVTRRFGTVLENVVMDENTRELDLDSAALAENSRGAYPLSFIPNASATGRAPHPKNIIMLTADAFSVLPPVARLTPSQAMYHFLSGYTAKVAGTEKGVTEPEATFSTCFGAPFMSRHPTEYGNLLRDLIAQHKVSCWLVNTGWTGGVYGTGNRMPIKATRALLAAALDGSLNNVEFRTDPNFGFEVPVDVPGVDNKILNPRETWADKAAYDAQAQKLVKMFIENFAKFEAHVDPDVRAAAPAAARAAE.

Substrate-binding residues include arginine 61, tyrosine 195, and lysine 201. ATP contacts are provided by residues lysine 201, histidine 220, and glycine 236–threonine 244. Residues lysine 201 and histidine 220 each coordinate Mn(2+). Mn(2+) is bound at residue aspartate 257. Residues glutamate 285, arginine 323, and threonine 448 each contribute to the ATP site. Arginine 323 lines the substrate pocket.

The protein belongs to the phosphoenolpyruvate carboxykinase (ATP) family. Requires Mn(2+) as cofactor.

It is found in the cytoplasm. The enzyme catalyses oxaloacetate + ATP = phosphoenolpyruvate + ADP + CO2. Its pathway is carbohydrate biosynthesis; gluconeogenesis. Functionally, involved in the gluconeogenesis. Catalyzes the conversion of oxaloacetate (OAA) to phosphoenolpyruvate (PEP) through direct phosphoryl transfer between the nucleoside triphosphate and OAA. The chain is Phosphoenolpyruvate carboxykinase (ATP) from Parvibaculum lavamentivorans (strain DS-1 / DSM 13023 / NCIMB 13966).